We begin with the raw amino-acid sequence, 91 residues long: Small ribosomal subunit protein bS16 (91 aa).

Belongs to the bacterial ribosomal protein bS16 family. Part of the 30S ribosomal subunit.

Functionally, binds to the lower part of the body of the 30S subunit, where it stabilizes two of its domains. The sequence is that of Small ribosomal subunit protein bS16 from Thermus thermophilus.